Reading from the N-terminus, the 755-residue chain is Bacteriophytochrome (755 aa).

Residue Cys-24 coordinates a tetrapyrrole. Residues 26 to 94 (REPIHIPGSI…LQAALPPGCP (69 aa)) form the PAS domain. A chromophore binding domain region spans residues 95-504 (DALQYRATLD…RDTLTGALGE (410 aa)). The GAF domain maps to 152-316 (NLRALAEVAT…YLGRLLSLQV (165 aa)). Positions 529–747 (VISHHMQEPV…TFRCWLPDAG (219 aa)) constitute a Histidine kinase domain. His-532 bears the Phosphohistidine; by autocatalysis mark.

This sequence in the N-terminal section; belongs to the phytochrome family. Contains one covalently linked tetrapyrrole chromophore. Lacks the cysteine conserved in plant phytochromes (at the position of Met-259) that binds chromophore. An engineered sequence used for X-ray crystallography forms a thioether link to biliverdin through Cys-24. The natural sequence can bind phycocyanobilin and phytochromobilin in vitro, but the identity of the natural chromophore is unknown.

The catalysed reaction is ATP + protein L-histidine = ADP + protein N-phospho-L-histidine.. In terms of biological role, photoreceptor which exists in two forms that are reversibly interconvertible by light: the R form that absorbs maximally in the red region of the spectrum and the FR form that absorbs maximally in the far-red region. Also has a slight blue shift for the far-red maximum. Could also absorb green light. May participate in regulating pigment synthesis like the carotenoid deinoxanthin which could protect the bacterium from intense visible light. The protein is Bacteriophytochrome (bphP) of Deinococcus radiodurans (strain ATCC 13939 / DSM 20539 / JCM 16871 / CCUG 27074 / LMG 4051 / NBRC 15346 / NCIMB 9279 / VKM B-1422 / R1).